Reading from the N-terminus, the 718-residue chain is Protein spire homolog 2 (718 aa).

Disordered regions lie at residues 1-22 (MARAGGGGAAAPERAGGAARPE) and 143-166 (DSSCGAADEGYVGPEEEEEAEGGP). Low complexity predominate over residues 10–21 (AAPERAGGAARP). One can recognise a KIND domain in the interval 26–207 (LSLEEVLKVY…RALFVETLEL (182 aa)). WH2 domains lie at 251-265 (QLMRELRHGVKLKKV), 281-299 (PFEMLMQDIRARNYKLRKV), and 345-362 (LHEKILEEIKQERRLRPV). Phosphoserine is present on serine 374. The segment at 397–434 (TDTGSGSQRPRPRVLLKAPTLAEMEEMNTSEEEESPCG) is disordered. The segment covering 419–432 (EMEEMNTSEEEESP) has biased composition (acidic residues). Serine 443, serine 445, and serine 479 each carry phosphoserine. The interval 456–518 (MASGLQSAAQ…SSLSSVDGPE (63 aa)) is disordered. Over residues 496 to 513 (SGQSQPLPSSALPSSLSS) the composition is skewed to low complexity. The spir-box stretch occupies residues 538–558 (LALTVEEVVDVRRVLVKAEME).

It belongs to the spire family. In terms of tissue distribution, detected in oocytes.

Its subcellular location is the cytoplasm. The protein localises to the cytoskeleton. It localises to the cytosol. The protein resides in the cell membrane. It is found in the cytoplasmic vesicle membrane. Acts as an actin nucleation factor, remains associated with the slow-growing pointed end of the new filament. Involved in intracellular vesicle transport along actin fibers, providing a novel link between actin cytoskeleton dynamics and intracellular transport. Required for asymmetric spindle positioning and asymmetric cell division during oocyte meiosis. Required for normal formation of the cleavage furrow and for polar body extrusion during female germ cell meiosis. Also acts in the nucleus: together with SPIRE1 and SPIRE2, promotes assembly of nuclear actin filaments in response to DNA damage in order to facilitate movement of chromatin and repair factors after DNA damage. This is Protein spire homolog 2 (Spire2) from Mus musculus (Mouse).